Reading from the N-terminus, the 197-residue chain is Small ribosomal subunit protein uS4 (197 aa).

The 61-residue stretch at 87 to 147 folds into the S4 RNA-binding domain; that stretch reads SRIDNVIFRL…ESKKNTQRMK (61 aa).

Belongs to the universal ribosomal protein uS4 family. In terms of assembly, part of the 30S ribosomal subunit. Contacts protein S5. The interaction surface between S4 and S5 is involved in control of translational fidelity.

Functionally, one of the primary rRNA binding proteins, it binds directly to 16S rRNA where it nucleates assembly of the body of the 30S subunit. In terms of biological role, with S5 and S12 plays an important role in translational accuracy. This chain is Small ribosomal subunit protein uS4, found in Agathobacter rectalis (strain ATCC 33656 / DSM 3377 / JCM 17463 / KCTC 5835 / VPI 0990) (Eubacterium rectale).